The primary structure comprises 269 residues: Small ribosomal subunit protein uS2 (269 aa).

The segment at 228-269 is disordered; that stretch reads ARAERQAAAAKDAAGDTGKSEADAEAVKAEAAAEEKAETTEA. Residues 233–244 are compositionally biased toward low complexity; the sequence is QAAAAKDAAGDT. The segment covering 245-269 has biased composition (basic and acidic residues); sequence GKSEADAEAVKAEAAAEEKAETTEA.

The protein belongs to the universal ribosomal protein uS2 family.

This chain is Small ribosomal subunit protein uS2, found in Corynebacterium urealyticum (strain ATCC 43042 / DSM 7109).